The following is a 108-amino-acid chain: MDEIYPAVGNELTMEVWQQQWQTFEQEGLDTLEKRRQQALALDIECQAEQILGSPGKIICQRAKQDNSDIIVVGHRGRWGLSEILLGSVGNYVFHHAHCCVFVVPTPD.

Belongs to the universal stress protein A family.

This Synechocystis sp. (strain ATCC 27184 / PCC 6803 / Kazusa) protein is Universal stress protein Slr1101.